The following is a 214-amino-acid chain: Soluble inorganic pyrophosphatase (214 aa).

Positions 1–20 (MSEEDKTAASAEQPKRAPKL) are disordered. Substrate contacts are provided by Lys-64, Arg-78, and Tyr-90. Residues Asp-100, Asp-105, and Asp-137 each contribute to the Mg(2+) site. A substrate-binding site is contributed by Tyr-174.

It belongs to the PPase family. The cofactor is Mg(2+).

It is found in the cytoplasm. It carries out the reaction diphosphate + H2O = 2 phosphate + H(+). In Zea mays (Maize), this protein is Soluble inorganic pyrophosphatase (IPP).